The sequence spans 1387 residues: Collagen-like protein 6 (1387 aa).

A glycan (N-linked (GlcNAc...) asparagine; by host) is linked at Asn6. Collagen-like domains lie at 95–154, 161–220, 266–325, 344–403, 450–508, and 512–751; these read GNNG…KGDI, GDKG…KGDN, GEKG…KGEM, GSKG…KGEK, IKGD…KGDI, and GEKG…SGSS. Disordered stretches follow at residues 98 to 219, 268 to 422, and 454 to 753; these read GNNG…DKGD, KGEI…QNQG, and KGEK…SSCQ. Composition is skewed to basic and acidic residues over residues 114–181, 189–199, 207–219, 268–340, 364–382, 390–405, 454–535, and 544–747; these read IKGD…KGSK, SKGDNGDKGSK, SKGD…DKGD, KGEI…DGIK, KGDR…KGDN, SKGD…EKGE, KGEK…KGDI, and KGEK…DKGE. N-linked (GlcNAc...) asparagine; by host glycans are attached at residues Asn794, Asn814, Asn819, Asn826, Asn846, Asn886, Asn894, Asn969, Asn1032, Asn1077, Asn1123, Asn1200, Asn1224, Asn1232, and Asn1233.

May be hydroxylated on lysine by the viral-encoded procollagen-lysine,2-oxoglutarate 5-dioxygenase.

The protein resides in the virion. Its function is as follows. May participate in the formation of a layer of cross-linked glycosylated fibrils at the viral surface thus giving it a hairy-like appearance. This Acanthamoeba polyphaga mimivirus (APMV) protein is Collagen-like protein 6.